Reading from the N-terminus, the 513-residue chain is ATP synthase subunit alpha (513 aa).

An ATP-binding site is contributed by 169-176; that stretch reads GDRQTGKT.

Belongs to the ATPase alpha/beta chains family. As to quaternary structure, F-type ATPases have 2 components, CF(1) - the catalytic core - and CF(0) - the membrane proton channel. CF(1) has five subunits: alpha(3), beta(3), gamma(1), delta(1), epsilon(1). CF(0) has three main subunits: a(1), b(2) and c(9-12). The alpha and beta chains form an alternating ring which encloses part of the gamma chain. CF(1) is attached to CF(0) by a central stalk formed by the gamma and epsilon chains, while a peripheral stalk is formed by the delta and b chains.

The protein localises to the cell inner membrane. It carries out the reaction ATP + H2O + 4 H(+)(in) = ADP + phosphate + 5 H(+)(out). Its function is as follows. Produces ATP from ADP in the presence of a proton gradient across the membrane. The alpha chain is a regulatory subunit. This Vibrio vulnificus (strain CMCP6) protein is ATP synthase subunit alpha.